The following is a 541-amino-acid chain: uncharacterized protein (541 aa).

6 helical membrane passes run L57–I77, L90–L110, V144–I164, A167–T187, M221–F241, and V257–W277. Residues L278–R329 enclose the HAMP domain. The Guanylate cyclase domain maps to A361–C485.

This sequence belongs to the adenylyl cyclase class-3 family.

The protein resides in the cell membrane. This is an uncharacterized protein from Mycobacterium tuberculosis (strain CDC 1551 / Oshkosh).